We begin with the raw amino-acid sequence, 202 residues long: Imidazole glycerol phosphate synthase subunit HisH 2 (202 aa).

The Glutamine amidotransferase type-1 domain maps to 1 to 202 (MIVVIDYGVG…QLFKNFVELV (202 aa)). Cys80 serves as the catalytic Nucleophile. Active-site residues include His183 and Glu185.

As to quaternary structure, heterodimer of HisH and HisF.

The protein localises to the cytoplasm. It catalyses the reaction 5-[(5-phospho-1-deoxy-D-ribulos-1-ylimino)methylamino]-1-(5-phospho-beta-D-ribosyl)imidazole-4-carboxamide + L-glutamine = D-erythro-1-(imidazol-4-yl)glycerol 3-phosphate + 5-amino-1-(5-phospho-beta-D-ribosyl)imidazole-4-carboxamide + L-glutamate + H(+). The catalysed reaction is L-glutamine + H2O = L-glutamate + NH4(+). The protein operates within amino-acid biosynthesis; L-histidine biosynthesis; L-histidine from 5-phospho-alpha-D-ribose 1-diphosphate: step 5/9. Functionally, IGPS catalyzes the conversion of PRFAR and glutamine to IGP, AICAR and glutamate. The HisH subunit catalyzes the hydrolysis of glutamine to glutamate and ammonia as part of the synthesis of IGP and AICAR. The resulting ammonia molecule is channeled to the active site of HisF. The sequence is that of Imidazole glycerol phosphate synthase subunit HisH 2 (hisH2) from Pseudomonas aeruginosa (strain ATCC 15692 / DSM 22644 / CIP 104116 / JCM 14847 / LMG 12228 / 1C / PRS 101 / PAO1).